Reading from the N-terminus, the 461-residue chain is Transcriptional activator RocR (461 aa).

A 4-aspartylphosphate modification is found at Asp-57. The Sigma-54 factor interaction domain occupies 143-372; that stretch reads ILGTSPAIQD…EHMIEGAMNF (230 aa). Residues 171–178 and 233–242 contribute to the ATP site; these read GETGTGKE and AHGGTLLLDE. Positions 434-453 form a DNA-binding region, H-T-H motif; the sequence is ISKAAQELGISRQSLQYRLK.

Its function is as follows. Positive regulator of arginine catabolism. Controls the transcription of the two operons rocABC and rocDEF and probably acts by binding to the corresponding upstream activating sequences. The sequence is that of Transcriptional activator RocR (rocR) from Bacillus subtilis (strain 168).